An 848-amino-acid polypeptide reads, in one-letter code: Adenylate cyclase (848 aa).

The interval 1–535 is catalytic; it reads MYLYIETLKQ…DVSHHFPLRL (535 aa). The regulatory stretch occupies residues 541 to 848; the sequence is KALYSPCEIR…DTPLLQQYFS (308 aa). A Phosphohistidine; by CRR modification is found at His609.

Belongs to the adenylyl cyclase class-1 family.

It localises to the cytoplasm. It catalyses the reaction ATP = 3',5'-cyclic AMP + diphosphate. This Shigella flexneri protein is Adenylate cyclase (cyaA).